Here is a 447-residue protein sequence, read N- to C-terminus: Probable tRNA methyltransferase 9B (447 aa).

Position 212 is a phosphoserine (serine 212). Disordered stretches follow at residues 274 to 306 and 320 to 348; these read AWANSTVSQQPSRHPSLDLHAPEPFSTKGPNLD and WLRTPGTSDNFSGHKGGGSRRKEGGNFLD. The span at 276-286 shows a compositional bias: polar residues; sequence ANSTVSQQPSR.

The protein belongs to the methyltransferase superfamily.

In terms of biological role, may modify wobble uridines in specific arginine and glutamic acid tRNAs. Acts as a tumor suppressor by promoting the expression of LIN9. In Mus musculus (Mouse), this protein is Probable tRNA methyltransferase 9B (Trmt9b).